A 76-amino-acid chain; its full sequence is Omega-scoloptoxin(15)-Ssd3c (76 aa).

Residues 1-23 (MEKKIIFLVVLVALLALPEFISS) form the signal peptide.

Belongs to the scoloptoxin-15 family. Contains 2 disulfide bonds. Expressed by the venom gland.

The protein localises to the secreted. In terms of biological role, voltage-gated calcium channel inhibitor (Cav) (8.6% block at 10 nM), when tested on DRG neurons. This chain is Omega-scoloptoxin(15)-Ssd3c, found in Scolopendra dehaani (Thai centipede).